The following is a 494-amino-acid chain: Sucrose-6-phosphate hydrolase (494 aa).

Substrate contacts are provided by residues 45–48, Q64, 107–108, 168–169, and E223; these read LLND, YS, and RD. The active site involves D48.

Belongs to the glycosyl hydrolase 32 family.

It catalyses the reaction Hydrolysis of terminal non-reducing beta-D-fructofuranoside residues in beta-D-fructofuranosides.. The protein operates within glycan biosynthesis; sucrose metabolism. This chain is Sucrose-6-phosphate hydrolase (scrB), found in Staphylococcus xylosus.